The following is an 88-amino-acid chain: Small ribosomal subunit protein bS16c (88 aa).

It belongs to the bacterial ribosomal protein bS16 family.

The protein resides in the plastid. Its subcellular location is the chloroplast. This Oenothera elata subsp. hookeri (Hooker's evening primrose) protein is Small ribosomal subunit protein bS16c.